The primary structure comprises 113 residues: MHEMAICESLRVSMEEAARAQDFSRVTRVRLAIGAFAGVEVEALRFGFDVVMQGSLAEGAELVVLEEEGTAWCFDCNRTVPLATRLDPCPCCGGERLVPNGGTGMTIKDLEVV.

A Ni(2+)-binding site is contributed by His-2. Zn(2+) contacts are provided by Cys-73, Cys-76, Cys-89, and Cys-92.

The protein belongs to the HypA/HybF family.

In terms of biological role, involved in the maturation of [NiFe] hydrogenases. Required for nickel insertion into the metal center of the hydrogenase. In Azorhizobium caulinodans (strain ATCC 43989 / DSM 5975 / JCM 20966 / LMG 6465 / NBRC 14845 / NCIMB 13405 / ORS 571), this protein is Hydrogenase maturation factor HypA.